The primary structure comprises 250 residues: DNA polymerase sliding clamp (250 aa).

Belongs to the PCNA family. As to quaternary structure, homotrimer. The subunits circularize to form a toroid; DNA passes through its center. Replication factor C (RFC) is required to load the toroid on the DNA.

Sliding clamp subunit that acts as a moving platform for DNA processing. Responsible for tethering the catalytic subunit of DNA polymerase and other proteins to DNA during high-speed replication. This chain is DNA polymerase sliding clamp, found in Methanococcus maripaludis (strain C5 / ATCC BAA-1333).